A 2492-amino-acid polypeptide reads, in one-letter code: MTAEPMSESKLNTLVQKLHDFLAHSSEESEETSSPPRLAMNQNTDKISGSGSNSDMMENSKEEGTSSSEKSKSSGSSRSKRKPSIVTKYVESDDEKPLDDETVNEDASNENSENDITMQSLPKGTVIVQPEPVLNEDKDDFKGPEFRSRSKMKTENLKKRGEDGLHGIVSCTACGQQVNHFQKDSIYRHPSLQVLICKNCFKYYMSDDISRDSDGMDEQCRWCAEGGNLICCDFCHNAFCKKCILRNLGRKELSTIMDENNQWYCYICHPEPLLDLVTACNSVFENLEQLLQQNKKKIKVDSEKSNKVYEHTSRFSPKKTSSNCNGEEKKLDDSCSGSVTYSYSALIVPKEMIKKAKKLIETTANMNSSYVKFLKQATDNSEISSATKLRQLKAFKSVLADIKKAHLALEEDLNSEFRAMDAVNKEKNTKEHKVIDAKFETKARKGEKPCALEKKDISKSEAKLSRKQVDSEHMHQNVPTEEQRTNKSTGGEHKKSDRKEEPQYEPANTSEDLDMDIVSVPSSVPEDIFENLETAMEVQSSVDHQGDGSSGTEQEVESSSVKLNISSKDNRGGIKSKTTAKVTKELYVKLTPVSLSNSPIKGADCQEVPQDKDGYKSCGLNPKLEKCGLGQENSDNEHLVENEVSLLLEESDLRRSPRVKTTPLRRPTETNPVTSNSDEECNETVKEKQKLSVPVRKKDKRNSSDSAIDNPKPNKLPKSKQSETVDQNSDSDEMLAILKEVSRMSHSSSSDTDINEIHTNHKTLYDLKTQAGKDDKGKRKRKSSTSGSDFDTKKGKSAKSSIISKKKRQTQSESSNYDSELEKEIKSMSKIGAARTTKKRIPNTKDFDSSEDEKHSKKGMDNQGHKNLKTSQEGSSDDAERKQERETFSSAEGTVDKDTTIMELRDRLPKKQQASASTDGVDKLSGKEESFTSLEVRKVAETKEKSKHLKTKTCKKVQDGLSDIAEKFLKKDQSDETSEDDKKQSKKGTEEKKKPSDFKKKVIKMEQQYESSSDGTEKLPEREEICHFPKGIKQIKNGTTDGEKKSKKIRDKTSKKKDELSDYAEKSTGKGDSCDSSEDKKSKNGAYGREKKRCKLLGKSSRKRQDCSSSDTEKYSMKEDGCNSSDKRLKRIELRERRNLSSKRNTKEIQSGSSSSDAEESSEDNKKKKQRTSSKKKAVIVKEKKRNSLRTSTKRKQADITSSSSSDIEDDDQNSIGEGSSDEQKIKPVTENLVLSSHTGFCQSSGDEALSKSVPVTVDDDDDDNDPENRIAKKMLLEEIKANLSSDEDGSSDDEPEEGKKRTGKQNEENPGDEEAKNQVNSESDSDSEESKKPRYRHRLLRHKLTVSDGESGEEKKTKPKEHKEVKGRNRRKVSSEDSEDSDFQESGVSEEVSESEDEQRPRTRSAKKAELEENQRSYKQKKKRRRIKVQEDSSSENKSNSEEEEEEKEEEEEEEEEEEEEEEDENDDSKSPGKGRKKIRKILKDDKLRTETQNALKEEEERRKRIAEREREREKLREVIEIEDASPTKCPITTKLVLDEDEETKEPLVQVHRNMVIKLKPHQVDGVQFMWDCCCESVKKTKKSPGSGCILAHCMGLGKTLQVVSFLHTVLLCDKLDFSTALVVCPLNTALNWMNEFEKWQEGLKDDEKLEVSELATVKRPQERSYMLQRWQEDGGVMIIGYEMYRNLAQGRNVKSRKLKEIFNKALVDPGPDFVVCDEGHILKNEASAVSKAMNSIRSRRRIILTGTPLQNNLIEYHCMVNFIKENLLGSIKEFRNRFINPIQNGQCADSTMVDVRVMKKRAHILYEMLAGCVQRKDYTALTKFLPPKHEYVLAVRMTSIQCKLYQYYLDHLTGVGNNSEGGRGKAGAKLFQDFQMLSRIWTHPWCLQLDYISKENKGYFDEDSMDEFIASDSDETSMSLSSDDYTKKKKKGKKGKKDSSSSGSGSDNDVEVIKVWNSRSRGGGEGNVDETGNNPSVSLKLEESKATSSSNPSSPAPDWYKDFVTDADAEVLEHSGKMVLLFEILRMAEEIGDKVLVFSQSLISLDLIEDFLELASREKTEDKDKPLIYKGEGKWLRNIDYYRLDGSTTAQSRKKWAEEFNDETNVRGRLFIISTKAGSLGINLVAANRVIIFDASWNPSYDIQSIFRVYRFGQTKPVYVYRFLAQGTMEDKIYDRQVTKQSLSFRVVDQQQVERHFTMNELTELYTFEPDLLDDPNSEKKKKRDTPMLPKDTILAELLQIHKEHIVGYHEHDSLLDHKEEEELTEEERKAAWAEYEAEKKGLTMRFNIPTGTNLPPVSFNSQTPYIPFNLGALSAMSNQQLEDLINQGREKVVEATNSVTAVRIQPLEDIISAVWKENMNLSEAQVQALALSRQASQELDVKRREAIYNDVLTKQQMLISCVQRILMNRRLQQQYNQQQQQQMTYQQATLGHLMMPKPPNLIMNPSNYQQIDMRGMYQPVAGGMQPPPLQRAPPPMRSKNPGPSQGKSM.

Residues 1–147 (MTAEPMSESK…KDDFKGPEFR (147 aa)) form a disordered region. A Glycyl lysine isopeptide (Lys-Gly) (interchain with G-Cter in SUMO2) cross-link involves residue Lys-10. A compositionally biased stretch (basic and acidic residues) spans 17 to 27 (KLHDFLAHSSE). Residues Ser-25 and Ser-34 each carry the phosphoserine modification. The span at 40 to 57 (MNQNTDKISGSGSNSDMM) shows a compositional bias: polar residues. A compositionally biased stretch (basic and acidic residues) spans 58 to 72 (ENSKEEGTSSSEKSK). Phosphotyrosine is present on Tyr-89. Phosphoserine is present on residues Ser-92 and Ser-112. The segment covering 92-108 (SDDEKPLDDETVNEDAS) has biased composition (acidic residues). Positions 135-147 (NEDKDDFKGPEFR) are enriched in basic and acidic residues. Glycyl lysine isopeptide (Lys-Gly) (interchain with G-Cter in SUMO2) cross-links involve residues Lys-138 and Lys-142. The ADD domain maps to 159-296 (KRGEDGLHGI…LEQLLQQNKK (138 aa)). A GATA-type; atypical zinc finger spans residues 170-206 (SCTACGQQVNHFQKDSIYRHPSLQVLICKNCFKYYMS). The residue at position 213 (Ser-213) is a Phosphoserine. The PHD-type; atypical zinc-finger motif lies at 217 to 272 (DEQCRWCAEGGNLICCDFCHNAFCKKCILRNLGRKELSTIMDENNQWYCYICHPEP). Lys-299 participates in a covalent cross-link: Glycyl lysine isopeptide (Lys-Gly) (interchain with G-Cter in SUMO2). Ser-316 is modified (phosphoserine). Residue Lys-438 forms a Glycyl lysine isopeptide (Lys-Gly) (interchain with G-Cter in SUMO2) linkage. Residues 445–502 (KGEKPCALEKKDISKSEAKLSRKQVDSEHMHQNVPTEEQRTNKSTGGEHKKSDRKEEP) show a composition bias toward basic and acidic residues. 2 disordered regions span residues 445–516 (KGEK…LDMD) and 535–576 (AMEV…GIKS). The segment covering 550-567 (SGTEQEVESSSVKLNISS) has biased composition (polar residues). The short motif at 581-594 (KVTKELYVKLTPVS) is the PxVxL motif element. Thr-591 carries the phosphothreonine modification. Positions 593–616 (VSLSNSPIKGADCQEVPQDKDGYK) are disordered. Phosphoserine is present on residues Ser-594 and Ser-598. Residue Lys-623 forms a Glycyl lysine isopeptide (Lys-Gly) (interchain with G-Cter in SUMO1); alternate linkage. A Glycyl lysine isopeptide (Lys-Gly) (interchain with G-Cter in SUMO2); alternate cross-link involves residue Lys-623. Phosphoserine is present on Ser-634. A disordered region spans residues 649–956 (EESDLRRSPR…KHLKTKTCKK (308 aa)). Thr-674 carries the post-translational modification Phosphothreonine. Phosphoserine is present on residues Ser-675, Ser-677, Ser-729, and Ser-731. Basic and acidic residues predominate over residues 755-777 (NEIHTNHKTLYDLKTQAGKDDKG). Ser-784, Ser-819, Ser-849, Ser-850, Ser-875, and Ser-876 each carry phosphoserine. Residues 843–864 (NTKDFDSSEDEKHSKKGMDNQG) are compositionally biased toward basic and acidic residues. Over residues 878 to 887 (DAERKQERET) the composition is skewed to basic and acidic residues. At Ser-889 the chain carries Phosphoserine. Composition is skewed to basic and acidic residues over residues 894–909 (TVDK…DRLP) and 920–944 (GVDK…ETKE). Residues 945 to 955 (KSKHLKTKTCK) show a composition bias toward basic residues. Ser-962 is modified (phosphoserine). Lys-967 is subject to N6-acetyllysine. Residues 968–1004 (FLKKDQSDETSEDDKKQSKKGTEEKKKPSDFKKKVIK) show a composition bias toward basic and acidic residues. The interval 968–1479 (FLKKDQSDET…SKSPGKGRKK (512 aa)) is disordered. Ser-974 is subject to Phosphoserine. A Phosphothreonine modification is found at Thr-977. Residue Lys-1004 forms a Glycyl lysine isopeptide (Lys-Gly) (interchain with G-Cter in SUMO2) linkage. Phosphoserine is present on residues Ser-1011, Ser-1012, and Ser-1013. The segment covering 1015 to 1027 (GTEKLPEREEICH) has biased composition (basic and acidic residues). Over residues 1045 to 1055 (KSKKIRDKTSK) the composition is skewed to basic residues. Basic and acidic residues predominate over residues 1056-1082 (KKDELSDYAEKSTGKGDSCDSSEDKKS). Ser-1061 bears the Phosphoserine mark. The residue at position 1063 (Tyr-1063) is a Phosphotyrosine. The segment covering 1090–1102 (EKKRCKLLGKSSR) has biased composition (basic residues). The segment covering 1103–1139 (KRQDCSSSDTEKYSMKEDGCNSSDKRLKRIELRERRN) has biased composition (basic and acidic residues). The segment covering 1167–1195 (KKKQRTSSKKKAVIVKEKKRNSLRTSTKR) has biased composition (basic residues). Positions 1189-1326 (LRTSTKRKQA…KNQVNSESDS (138 aa)) are interaction with DAXX. The segment covering 1233 to 1246 (LVLSSHTGFCQSSG) has biased composition (polar residues). Phosphoserine is present on residues Ser-1244, Ser-1245, and Ser-1253. A compositionally biased stretch (basic and acidic residues) spans 1267 to 1281 (PENRIAKKMLLEEIK). Over residues 1286-1297 (SDEDGSSDDEPE) the composition is skewed to acidic residues. The span at 1298 to 1308 (EGKKRTGKQNE) shows a compositional bias: basic and acidic residues. Ser-1322, Ser-1324, and Ser-1326 each carry phosphoserine. Basic residues predominate over residues 1334–1345 (PRYRHRLLRHKL). Ser-1348 and Ser-1352 each carry phosphoserine. Basic and acidic residues-rich tracts occupy residues 1353–1368 (GEEK…EVKG) and 1408–1417 (KKAELEENQR). Positions 1419-1428 (YKQKKKRRRI) are enriched in basic residues. A compositionally biased stretch (acidic residues) spans 1443–1468 (EEEEEEKEEEEEEEEEEEEEEEDEND). Residue Lys-1488 forms a Glycyl lysine isopeptide (Lys-Gly) (interchain with G-Cter in SUMO2) linkage. Ser-1527 carries the phosphoserine modification. Position 1529 is a phosphothreonine (Thr-1529). Positions 1581–1768 (KTKKSPGSGC…HCMVNFIKEN (188 aa)) constitute a Helicase ATP-binding domain. 1594–1601 (HCMGLGKT) is a binding site for ATP. Residues 1719–1722 (DEGH) carry the DEGH box motif. Phosphoserine is present on residues Ser-1906 and Ser-1913. Residues 1913–2000 (SDSDETSMSL…SSNPSSPAPD (88 aa)) form a disordered region. Residues 1929 to 1938 (KKKKKGKKGK) show a composition bias toward basic residues. Lys-1982 participates in a covalent cross-link: Glycyl lysine isopeptide (Lys-Gly) (interchain with G-Cter in SUMO1); alternate. Lys-1982 participates in a covalent cross-link: Glycyl lysine isopeptide (Lys-Gly) (interchain with G-Cter in SUMO2); alternate. Lys-1987 participates in a covalent cross-link: Glycyl lysine isopeptide (Lys-Gly) (interchain with G-Cter in SUMO2). Residues 1990-1999 (SSSNPSSPAP) show a composition bias toward low complexity. 2 positions are modified to phosphoserine: Ser-1992 and Ser-1996. An interaction with MECP2 region spans residues 2010-2280 (DAEVLEHSGK…RKAAWAEYEA (271 aa)). The Helicase C-terminal domain maps to 2025 to 2205 (EILRMAEEIG…ERHFTMNELT (181 aa)). Ser-2220 carries the phosphoserine modification. The disordered stretch occupies residues 2462–2492 (PVAGGMQPPPLQRAPPPMRSKNPGPSQGKSM). Over residues 2468 to 2479 (QPPPLQRAPPPM) the composition is skewed to pro residues. Residues Arg-2474 and Arg-2480 each carry the omega-N-methylarginine modification.

The protein belongs to the SNF2/RAD54 helicase family. In terms of assembly, interacts with DAXX to form the chromatin remodeling complex ATRX:DAXX. Probably binds EZH2. Binds annexin V in a calcium and phosphatidylcholine/phosphatidylserine-dependent manner. Interacts directly with CBX5 via the PxVxL motif. Interacts with RAD50, MRE11 and NBN; indicative for an association with the MRN complex. Interacts with histone MACROH2A1. Interacts with histone H3 peptides methylated at 'Lys-10' with preferences H3K9me3 &gt; H3K9me2 &gt; H3K9me1. Interacts with histone H3 peptides unmethylated at 'Lys-5' (H3K4me0). Interacts with MECP2, SMC1 and SMC3. Interacts with SETDB1, TRIM28 and ZNF274. Phosphorylated at serine residues during mitose. Phosphorylation may promote the release from the nuclear matrix and progression to mitosis. In terms of tissue distribution, ubiquitous.

The protein localises to the nucleus. Its subcellular location is the chromosome. The protein resides in the telomere. It localises to the PML body. It carries out the reaction ATP + H2O = ADP + phosphate + H(+). Functionally, involved in transcriptional regulation and chromatin remodeling. Facilitates DNA replication in multiple cellular environments and is required for efficient replication of a subset of genomic loci. Binds to DNA tandem repeat sequences in both telomeres and euchromatin and in vitro binds DNA quadruplex structures. May help stabilizing G-rich regions into regular chromatin structures by remodeling G4 DNA and incorporating H3.3-containing nucleosomes. Catalytic component of the chromatin remodeling complex ATRX:DAXX which has ATP-dependent DNA translocase activity and catalyzes the replication-independent deposition of histone H3.3 in pericentric DNA repeats outside S-phase and telomeres, and the in vitro remodeling of H3.3-containing nucleosomes. Its heterochromatin targeting is proposed to involve a combinatorial readout of histone H3 modifications (specifically methylation states of H3K9 and H3K4) and association with CBX5. Involved in maintaining telomere structural integrity in embryonic stem cells which probably implies recruitment of CBX5 to telomeres. Reports on the involvement in transcriptional regulation of telomeric repeat-containing RNA (TERRA) are conflicting; according to a report, it is not sufficient to decrease chromatin condensation at telomeres nor to increase expression of telomeric RNA in fibroblasts. May be involved in telomere maintenance via recombination in ALT (alternative lengthening of telomeres) cell lines. Acts as a negative regulator of chromatin incorporation of transcriptionally repressive histone MACROH2A1, particularily at telomeres and the alpha-globin cluster in erythroleukemic cells. Participates in the allele-specific gene expression at the imprinted IGF2/H19 gene locus. On the maternal allele, required for the chromatin occupancy of SMC1 and CTCTF within the H19 imprinting control region (ICR) and involved in esatblishment of histone tails modifications in the ICR. May be involved in brain development and facial morphogenesis. Binds to zinc-finger coding genes with atypical chromatin signatures and regulates its H3K9me3 levels. Forms a complex with ZNF274, TRIM28 and SETDB1 to facilitate the deposition and maintenance of H3K9me3 at the 3' exons of zinc-finger genes. The sequence is that of Transcriptional regulator ATRX (ATRX) from Homo sapiens (Human).